The primary structure comprises 263 residues: uncharacterized protein (263 aa).

Gly31 to Thr38 is an ATP binding site.

The protein belongs to the CbbQ/NirQ/NorQ/GpvN family.

This is an uncharacterized protein from Staphylococcus epidermidis (strain ATCC 12228 / FDA PCI 1200).